A 427-amino-acid polypeptide reads, in one-letter code: 3-phosphoshikimate 1-carboxyvinyltransferase (427 aa).

The 3-phosphoshikimate site is built by K22, S23, and R27. A phosphoenolpyruvate-binding site is contributed by K22. Residues G96 and R124 each contribute to the phosphoenolpyruvate site. Residues S169, S170, Q171, S197, D313, N336, and K340 each contribute to the 3-phosphoshikimate site. Q171 lines the phosphoenolpyruvate pocket. The Proton acceptor role is filled by D313. The phosphoenolpyruvate site is built by R344, R386, and K411.

Belongs to the EPSP synthase family. In terms of assembly, monomer.

It is found in the cytoplasm. The enzyme catalyses 3-phosphoshikimate + phosphoenolpyruvate = 5-O-(1-carboxyvinyl)-3-phosphoshikimate + phosphate. The protein operates within metabolic intermediate biosynthesis; chorismate biosynthesis; chorismate from D-erythrose 4-phosphate and phosphoenolpyruvate: step 6/7. Its function is as follows. Catalyzes the transfer of the enolpyruvyl moiety of phosphoenolpyruvate (PEP) to the 5-hydroxyl of shikimate-3-phosphate (S3P) to produce enolpyruvyl shikimate-3-phosphate and inorganic phosphate. This is 3-phosphoshikimate 1-carboxyvinyltransferase from Enterobacter sp. (strain 638).